Here is a 495-residue protein sequence, read N- to C-terminus: Aspartyl/glutamyl-tRNA(Asn/Gln) amidotransferase subunit B (495 aa).

It belongs to the GatB/GatE family. GatB subfamily. Heterotrimer of A, B and C subunits.

It catalyses the reaction L-glutamyl-tRNA(Gln) + L-glutamine + ATP + H2O = L-glutaminyl-tRNA(Gln) + L-glutamate + ADP + phosphate + H(+). The enzyme catalyses L-aspartyl-tRNA(Asn) + L-glutamine + ATP + H2O = L-asparaginyl-tRNA(Asn) + L-glutamate + ADP + phosphate + 2 H(+). Allows the formation of correctly charged Asn-tRNA(Asn) or Gln-tRNA(Gln) through the transamidation of misacylated Asp-tRNA(Asn) or Glu-tRNA(Gln) in organisms which lack either or both of asparaginyl-tRNA or glutaminyl-tRNA synthetases. The reaction takes place in the presence of glutamine and ATP through an activated phospho-Asp-tRNA(Asn) or phospho-Glu-tRNA(Gln). This Acinetobacter baylyi (strain ATCC 33305 / BD413 / ADP1) protein is Aspartyl/glutamyl-tRNA(Asn/Gln) amidotransferase subunit B.